The primary structure comprises 83 residues: Mu-theraphotoxin-Hhn2l (83 aa).

The first 21 residues, methionine 1–alanine 21, serve as a signal peptide directing secretion. Positions serine 22–arginine 48 are excised as a propeptide. Intrachain disulfides connect cysteine 50/cysteine 65, cysteine 57/cysteine 70, and cysteine 64/cysteine 77. Leucine 81 is modified (leucine amide).

This sequence belongs to the neurotoxin 10 (Hwtx-1) family. 15 (Hntx-3) subfamily. Monomer. In terms of tissue distribution, expressed by the venom gland.

Its subcellular location is the secreted. In terms of biological role, lethal neurotoxin. Selectively blocks tetrodotoxin-sensitive voltage-gated sodium channels (Nav). Does not affect tetrodotoxin-resistant voltage-gated sodium channels or calcium channels. This Cyriopagopus hainanus (Chinese bird spider) protein is Mu-theraphotoxin-Hhn2l.